The sequence spans 291 residues: 6-deoxy-6-sulfogluconolactonase (291 aa).

Residues E17, N148, and D198 each coordinate a divalent metal cation. Catalysis depends on D198, which acts as the Proton donor/acceptor.

The protein belongs to the SMP-30/CGR1 family. A divalent metal cation is required as a cofactor.

The enzyme catalyses 6-deoxy-6-sulfo-D-glucono-1,5-lactone + H2O = 6-deoxy-6-sulfo-D-gluconate + H(+). Functionally, catalyzes the hydrolysis of 6-deoxy-6-sulfo-D-glucono-1,5-lactone to form 6-deoxy-6-sulfo-D-gluconate. Is involved in a degradation pathway of sulfoquinovose (SQ) that allows P.putida SQ1 to use SQ as the sole carbon and energy source for growth. The polypeptide is 6-deoxy-6-sulfogluconolactonase (Pseudomonas putida (Arthrobacter siderocapsulatus)).